The primary structure comprises 452 residues: Transcription factor SMP1 (452 aa).

The MADS-box domain maps to 3 to 57 (RRKIEIEPIKDDRNRTVTFIKRKAGLFKKAHELSVLCQVDIAVIILGSNNTFYEY). The mef2-type DNA-binding region spans 58–87 (SSVDMSNLLNVHQNNTDLPHNIIEPSDYGD). Positions 97–142 (NERKRRRRRATVLQPASHSGSCTVSSQDSSSVQNNGNLSAPLASND) are disordered. The segment covering 115-127 (SGSCTVSSQDSSS) has biased composition (low complexity).

Belongs to the MEF2 family. As to quaternary structure, can heterodimerize with RLM1. Interacts with HOG1. In terms of processing, phosphorylated by HOG1.

It localises to the nucleus. Functionally, transcription factor that controls part of the HOG1-mediated osmostress responses. Binds to the DNA sequence 5'-ACTACTA[TA](4)TAG-3'. Does not appear to function in the MPK1 pathway. In Saccharomyces cerevisiae (strain ATCC 204508 / S288c) (Baker's yeast), this protein is Transcription factor SMP1 (SMP1).